Here is a 142-residue protein sequence, read N- to C-terminus: Class II hydrophobin 7 (142 aa).

The first 16 residues, Met-1–Ala-16, serve as a signal peptide directing secretion. 4 disulfides stabilise this stretch: Cys-73/Cys-123, Cys-84/Cys-114, Cys-85/Cys-97, and Cys-124/Cys-135.

It belongs to the cerato-ulmin hydrophobin family. Homodimer. Homodimers further self-assemble to form highly ordered films at water-air interfaces through intermolecular interactions.

It is found in the secreted. The protein resides in the cell wall. Aerial growth, conidiation, and dispersal of filamentous fungi in the environment rely upon a capability of their secreting small amphipathic proteins called hydrophobins (HPBs) with low sequence identity. Class I can self-assemble into an outermost layer of rodlet bundles on aerial cell surfaces, conferring cellular hydrophobicity that supports fungal growth, development and dispersal; whereas Class II form highly ordered films at water-air interfaces through intermolecular interactions but contribute nothing to the rodlet structure. The polypeptide is Class II hydrophobin 7 (Trichoderma asperellum (strain ATCC 204424 / CBS 433.97 / NBRC 101777)).